The primary structure comprises 316 residues: uncharacterized protein (316 aa).

4 BNR repeats span residues 62-73 (FISDSQGLKFSP), 124-135 (KISVDNGLTWSN), 196-207 (FISRDGGLTWRV), and 242-253 (YFSLDQGRTWNQ).

This is an uncharacterized protein from Saccharomyces cerevisiae (strain ATCC 204508 / S288c) (Baker's yeast).